Consider the following 174-residue polypeptide: Peptide deformylase (174 aa).

Fe cation contacts are provided by Cys96 and His138. The active site involves Glu139. His142 is a Fe cation binding site.

The protein belongs to the polypeptide deformylase family. Fe(2+) serves as cofactor.

The catalysed reaction is N-terminal N-formyl-L-methionyl-[peptide] + H2O = N-terminal L-methionyl-[peptide] + formate. Its function is as follows. Removes the formyl group from the N-terminal Met of newly synthesized proteins. Requires at least a dipeptide for an efficient rate of reaction. N-terminal L-methionine is a prerequisite for activity but the enzyme has broad specificity at other positions. The chain is Peptide deformylase from Helicobacter pylori (strain G27).